A 264-amino-acid chain; its full sequence is ATP synthase subunit a (264 aa).

The next 5 helical transmembrane spans lie at 39–59 (LDTL…FYIV), 97–117 (VAPL…MDLV), 139–159 (TADP…VIFY), 205–225 (LFGN…LPWW), and 239–259 (LLVI…YISL).

This sequence belongs to the ATPase A chain family. In terms of assembly, F-type ATPases have 2 components, CF(1) - the catalytic core - and CF(0) - the membrane proton channel. CF(1) has five subunits: alpha(3), beta(3), gamma(1), delta(1), epsilon(1). CF(0) has three main subunits: a(1), b(2) and c(9-12). The alpha and beta chains form an alternating ring which encloses part of the gamma chain. CF(1) is attached to CF(0) by a central stalk formed by the gamma and epsilon chains, while a peripheral stalk is formed by the delta and b chains.

Its subcellular location is the cell inner membrane. Its function is as follows. Key component of the proton channel; it plays a direct role in the translocation of protons across the membrane. This Coxiella burnetii (strain Dugway 5J108-111) protein is ATP synthase subunit a.